Consider the following 218-residue polypeptide: Adenylate kinase (218 aa).

Position 12–17 (12–17 (GAGKGT)) interacts with ATP. An NMP region spans residues 32–61 (STGDIFRKNISENTPLGIEAKSYMDNGQLV). AMP-binding positions include Thr33, Arg38, 59–61 (QLV), 87–90 (GFPR), and Gln94. Positions 128 to 165 (GRRVCPSCGASYHIKFNPPTNDGKCDLCGSDVIQRKDD) are LID. ATP is bound at residue Arg129. 2 residues coordinate Zn(2+): Cys132 and Cys135. Residue 138–139 (SY) participates in ATP binding. Zn(2+) contacts are provided by Cys152 and Cys155. Residues Arg162 and Arg173 each contribute to the AMP site. Gln201 is a binding site for ATP.

Belongs to the adenylate kinase family. Monomer.

Its subcellular location is the cytoplasm. The catalysed reaction is AMP + ATP = 2 ADP. The protein operates within purine metabolism; AMP biosynthesis via salvage pathway; AMP from ADP: step 1/1. Functionally, catalyzes the reversible transfer of the terminal phosphate group between ATP and AMP. Plays an important role in cellular energy homeostasis and in adenine nucleotide metabolism. This Clostridium perfringens (strain 13 / Type A) protein is Adenylate kinase.